A 299-amino-acid chain; its full sequence is ATP phosphoribosyltransferase (299 aa).

Belongs to the ATP phosphoribosyltransferase family. Long subfamily. The cofactor is Mg(2+).

Its subcellular location is the cytoplasm. It carries out the reaction 1-(5-phospho-beta-D-ribosyl)-ATP + diphosphate = 5-phospho-alpha-D-ribose 1-diphosphate + ATP. It functions in the pathway amino-acid biosynthesis; L-histidine biosynthesis; L-histidine from 5-phospho-alpha-D-ribose 1-diphosphate: step 1/9. With respect to regulation, feedback inhibited by histidine. Functionally, catalyzes the condensation of ATP and 5-phosphoribose 1-diphosphate to form N'-(5'-phosphoribosyl)-ATP (PR-ATP). Has a crucial role in the pathway because the rate of histidine biosynthesis seems to be controlled primarily by regulation of HisG enzymatic activity. In Campylobacter jejuni subsp. jejuni serotype O:2 (strain ATCC 700819 / NCTC 11168), this protein is ATP phosphoribosyltransferase.